Consider the following 413-residue polypeptide: MGARSKEARHRWFSRLPPDASSSFLPCKRPKSVAFVLWIRPSCFLRESLPAELSGLPGLPLPPQAPTNTMNCGLPEAALSVIDWGRLKSGDVNEGARLLSACDDQGFFYLDLSSEPSFLHDHKSVLHFMDQYFHQGLADKMKDDRQSDTHGYEPVATSTGALNTLPDYYESLKASRDELHGDGRNLAPAVCDRQDLFLRFSDMMHQMVIAILQELDCQLGFGGDRASFQDFHRKDAESLTTLSMFRYPKQETLDLGVGHNKHTDIGTLTFLLCDQWGLQVLSKDPAGWRFVAPREGHAVINVGDTLRFLSGNRFRSAVHRVIPTQRLQHEDRYSIAYFLRAANDTQFTDSAGRQVSAKQWHDEKFDVFRETHEEQEKMPILTGGMERLENLPGIWCGVRLTDGICHRLGAEDC.

Positions 235–341 (DAESLTTLSM…RYSIAYFLRA (107 aa)) constitute a Fe2OG dioxygenase domain. H262, D264, and H319 together coordinate Fe cation. R332 contributes to the 2-oxoglutarate binding site.

It belongs to the iron/ascorbate-dependent oxidoreductase family.

It functions in the pathway secondary metabolite biosynthesis; terpenoid biosynthesis. Oxidoreductase; part of the gene cluster that mediates the biosynthesis of viridicatumtoxin, a tetracycline-like fungal meroterpenoid with a unique, fused spirobicyclic ring system. The first step of the pathway is the production of the malonamoyl-CoA starter unit for the polyketide synthase vrtA. The aldolase vrtJ may be involved in the synthesis of the malonamate substrate for malonamoyl-CoA synthetase vrtB. The polyketide synthase vrtA then may utilize the malonamoyl-CoA starter unit, followed by sequential condensation of eight malonyl-CoA units to form the polyketide backbone. The cyclization of the last ring could be mediated by the lactamase-like protein vrtG. The proposed post-PKS tailoring steps are a hydroxylation at C5 catalyzed the cytochrome P450 monooxygenase vrtE, a hydroxylation at C12a catalyzed by VrtH and/or VrtI, and an O-methylation by the O-methyltransferase vrtF. VrtC is then proposed to catalyze the transfer of a geranyl group synthesized by vrtD to the aromatic C ring of the tetracyclic polyketide intermediate of viridicatumtoxin to yield previridicatumtoxin. Finally, the cytochrome P450 monooxygenase vrtK catalyzes the spirocyclization of the geranyl moiety of previridicatumtoxin to afford viridicatumtoxin. The sequence is that of Oxidoreductase vrtI from Penicillium aethiopicum.